The sequence spans 919 residues: Hyphally regulated cell wall protein 1 (919 aa).

The signal sequence occupies residues 1–20 (MKVVSNFIFTILLTLNLSAA). N236 is a glycosylation site (N-linked (GlcNAc...) asparagine). The disordered stretch occupies residues 332–483 (SAPESESDLN…QSITSSPGQS (152 aa)). Over residues 344–392 (TTSSIETSSYSSAATESSVVSESSSAVDSLTSSSLSSKSESSDVVSSTT) the composition is skewed to low complexity. The segment covering 393–414 (NIESSSTAIETTMNSESSTDAG) has biased composition (polar residues). The span at 415 to 475 (SSSISQSESS…SNALSSTEQS (61 aa)) shows a compositional bias: low complexity. N-linked (GlcNAc...) asparagine glycans are attached at residues N449, N488, N580, N585, N607, N619, N631, N639, N647, and N693. Positions 567–590 (DATTTTTTSTGGDNSTGGNESGSN) are enriched in low complexity. The segment at 567–839 (DATTTTTTST…VANPVTTSTE (273 aa)) is disordered. 2 stretches are compositionally biased toward gly residues: residues 607 to 665 (NGSG…GSGS) and 675 to 707 (EGSG…GSGS). Low complexity predominate over residues 708–724 (QSGSESGSNSGSNEGSN). The span at 725-783 (PGAGNGSNEGSGQGSGNGSEAGSGQGSGPNNGSGSGHNDGSGSGSNQGSNPGAGSGSGS) shows a compositional bias: gly residues. Residues N729, N741, and N755 are each glycosylated (N-linked (GlcNAc...) asparagine). Residues 784-798 (ESGSNAGSHSGSNEG) show a composition bias toward low complexity. Over residues 799 to 811 (AKTDSIEGFHTES) the composition is skewed to basic and acidic residues. A compositionally biased stretch (polar residues) spans 823 to 833 (ATVTGNSVANP). N879 and N895 each carry an N-linked (GlcNAc...) asparagine glycan. Residue N895 is the site of GPI-anchor amidated asparagine attachment. Positions 896-919 (GSSIVTGGKSILFGLIVSMVVLFM) are cleaved as a propeptide — removed in mature form.

The protein belongs to the HYR1/IFF family. In terms of assembly, component of a multiprotein complex of 250 kDa composed of at least HYR1, MP65, and PRA1. In terms of processing, the GPI-anchor is attached to the protein in the endoplasmic reticulum and serves to target the protein to the cell surface. There, the glucosamine-inositol phospholipid moiety is cleaved off and the GPI-modified mannoprotein is covalently attached via its lipidless GPI glycan remnant to the 1,6-beta-glucan of the outer cell wall layer.

It localises to the secreted. It is found in the cell wall. Its subcellular location is the membrane. Its function is as follows. GPI-anchored hyphal cell wall protein required for hyphal growth and virulence. Involved in innate immune cell evasion through conferring resistance to neutrophil killing. Binds kininogen, the proteinaceous kinin precursor, and contributes to trigger the kinin-forming cascade on the cell surface. Production of kinins is often involved in the human host defense against microbial infections. This Candida albicans (strain SC5314 / ATCC MYA-2876) (Yeast) protein is Hyphally regulated cell wall protein 1 (HYR1).